Here is a 249-residue protein sequence, read N- to C-terminus: 1-(5-phosphoribosyl)-5-[(5-phosphoribosylamino)methylideneamino] imidazole-4-carboxamide isomerase (249 aa).

Catalysis depends on aspartate 8, which acts as the Proton acceptor. Aspartate 131 acts as the Proton donor in catalysis.

This sequence belongs to the HisA/HisF family.

It is found in the cytoplasm. It catalyses the reaction 1-(5-phospho-beta-D-ribosyl)-5-[(5-phospho-beta-D-ribosylamino)methylideneamino]imidazole-4-carboxamide = 5-[(5-phospho-1-deoxy-D-ribulos-1-ylimino)methylamino]-1-(5-phospho-beta-D-ribosyl)imidazole-4-carboxamide. The protein operates within amino-acid biosynthesis; L-histidine biosynthesis; L-histidine from 5-phospho-alpha-D-ribose 1-diphosphate: step 4/9. This Leptothrix cholodnii (strain ATCC 51168 / LMG 8142 / SP-6) (Leptothrix discophora (strain SP-6)) protein is 1-(5-phosphoribosyl)-5-[(5-phosphoribosylamino)methylideneamino] imidazole-4-carboxamide isomerase.